A 37-amino-acid polypeptide reads, in one-letter code: U1-ectatotoxin-Eb1a subunit B (37 aa).

This sequence belongs to the ectatomin family. Ectatomin-Eq subfamily. As to quaternary structure, heterodimer of subunits A and B; disulfide-linked. Expressed by the venom gland.

It localises to the secreted. The protein localises to the target cell membrane. The protein is U1-ectatotoxin-Eb1a subunit B of Ectatomma brunneum (Ant).